The chain runs to 213 residues: Cytidylate kinase (213 aa).

Residue 9-17 participates in ATP binding; it reads GPAASGKGT.

It belongs to the cytidylate kinase family. Type 1 subfamily.

It localises to the cytoplasm. The catalysed reaction is CMP + ATP = CDP + ADP. It catalyses the reaction dCMP + ATP = dCDP + ADP. This chain is Cytidylate kinase, found in Caulobacter vibrioides (strain ATCC 19089 / CIP 103742 / CB 15) (Caulobacter crescentus).